We begin with the raw amino-acid sequence, 23 residues long: Unknown protein NF005 from 2D-PAGE (23 aa).

The disordered stretch occupies residues Ala1–Asp23. The span at Ser9 to Asp23 shows a compositional bias: basic and acidic residues.

This chain is Unknown protein NF005 from 2D-PAGE, found in Naegleria fowleri (Brain eating amoeba).